A 289-amino-acid polypeptide reads, in one-letter code: UTP--glucose-1-phosphate uridylyltransferase 2 (289 aa).

It belongs to the UDPGP type 2 family.

It carries out the reaction alpha-D-glucose 1-phosphate + UTP + H(+) = UDP-alpha-D-glucose + diphosphate. It functions in the pathway glycolipid metabolism; diglucosyl-diacylglycerol biosynthesis. Functionally, catalyzes the formation of UDP-glucose from glucose-1-phosphate and UTP. This is an intermediate step in the biosynthesis of diglucosyl-diacylglycerol (Glc2-DAG), i.e. a glycolipid found in the membrane, which is also used as a membrane anchor for lipoteichoic acid (LTA). The chain is UTP--glucose-1-phosphate uridylyltransferase 2 (gtaB2) from Staphylococcus saprophyticus subsp. saprophyticus (strain ATCC 15305 / DSM 20229 / NCIMB 8711 / NCTC 7292 / S-41).